Here is a 342-residue protein sequence, read N- to C-terminus: Ribosomal RNA small subunit methyltransferase C (342 aa).

Belongs to the methyltransferase superfamily. RsmC family. In terms of assembly, monomer.

The protein localises to the cytoplasm. The catalysed reaction is guanosine(1207) in 16S rRNA + S-adenosyl-L-methionine = N(2)-methylguanosine(1207) in 16S rRNA + S-adenosyl-L-homocysteine + H(+). In terms of biological role, specifically methylates the guanine in position 1207 of 16S rRNA in the 30S particle. The sequence is that of Ribosomal RNA small subunit methyltransferase C from Salmonella typhi.